The primary structure comprises 498 residues: Lysine--tRNA ligase (498 aa).

Mg(2+) contacts are provided by E408 and E415.

The protein belongs to the class-II aminoacyl-tRNA synthetase family. Homodimer. Mg(2+) is required as a cofactor.

It localises to the cytoplasm. It catalyses the reaction tRNA(Lys) + L-lysine + ATP = L-lysyl-tRNA(Lys) + AMP + diphosphate. This Listeria monocytogenes serovar 1/2a (strain ATCC BAA-679 / EGD-e) protein is Lysine--tRNA ligase.